We begin with the raw amino-acid sequence, 246 residues long: Ribonuclease 3 (246 aa).

In terms of domain architecture, RNase III spans 20-145; the sequence is FSKLEKILGF…FVGAIYLDRG (126 aa). E62 contributes to the Mg(2+) binding site. Residue D66 is part of the active site. Mg(2+) contacts are provided by N131 and E134. E134 is an active-site residue. The 69-residue stretch at 173–241 folds into the DRBM domain; the sequence is SYKSLLIEWC…SKRGYFVFQS (69 aa).

Belongs to the ribonuclease III family. Homodimer. Mg(2+) is required as a cofactor.

Its subcellular location is the cytoplasm. The catalysed reaction is Endonucleolytic cleavage to 5'-phosphomonoester.. Functionally, digests double-stranded RNA. Involved in the processing of primary rRNA transcript to yield the immediate precursors to the large and small rRNAs (23S and 16S). Processes some mRNAs, and tRNAs when they are encoded in the rRNA operon. Processes pre-crRNA and tracrRNA of type II CRISPR loci if present in the organism. This chain is Ribonuclease 3, found in Flavobacterium psychrophilum (strain ATCC 49511 / DSM 21280 / CIP 103535 / JIP02/86).